The sequence spans 198 residues: Na(+)-translocating NADH-quinone reductase subunit E (198 aa).

The next 6 membrane-spanning stretches (helical) occupy residues 11–31 (SVFI…FLAV), 35–55 (VSTA…SVPV), 77–97 (FLNF…LEMF), 110–130 (GIFL…SFMV), 140–160 (VVYG…LAGL), and 176–196 (LGIT…FSGI).

It belongs to the NqrDE/RnfAE family. In terms of assembly, composed of six subunits; NqrA, NqrB, NqrC, NqrD, NqrE and NqrF.

It is found in the cell inner membrane. It catalyses the reaction a ubiquinone + n Na(+)(in) + NADH + H(+) = a ubiquinol + n Na(+)(out) + NAD(+). Its function is as follows. NQR complex catalyzes the reduction of ubiquinone-1 to ubiquinol by two successive reactions, coupled with the transport of Na(+) ions from the cytoplasm to the periplasm. NqrA to NqrE are probably involved in the second step, the conversion of ubisemiquinone to ubiquinol. This is Na(+)-translocating NADH-quinone reductase subunit E from Mannheimia succiniciproducens (strain KCTC 0769BP / MBEL55E).